The sequence spans 274 residues: Octanoyltransferase LipM (274 aa).

The 215-residue stretch at G31 to L245 folds into the BPL/LPL catalytic domain. Residue C147 is the Acyl-thioester intermediate of the active site.

This sequence belongs to the octanoyltransferase LipM family. Monomer.

The enzyme catalyses octanoyl-[ACP] + L-lysyl-[protein] = N(6)-octanoyl-L-lysyl-[protein] + holo-[ACP] + H(+). It participates in protein modification; protein lipoylation via endogenous pathway; protein N(6)-(lipoyl)lysine from octanoyl-[acyl-carrier-protein]. Functionally, catalyzes the transfer of endogenously produced octanoic acid from octanoyl-acyl-carrier-protein onto the lipoyl domain of GcvH, an intermediate carrier during protein lipoylation. This is Octanoyltransferase LipM from Kyrpidia tusciae (strain DSM 2912 / NBRC 15312 / T2) (Bacillus tusciae).